Reading from the N-terminus, the 188-residue chain is dCTP deaminase (188 aa).

DCTP-binding positions include 111–116 (KSTYAR), 135–137 (TLE), Gln-156, Tyr-170, Lys-179, and Gln-180. Residue Glu-137 is the Proton donor/acceptor of the active site.

It belongs to the dCTP deaminase family. Homotrimer.

The enzyme catalyses dCTP + H2O + H(+) = dUTP + NH4(+). The protein operates within pyrimidine metabolism; dUMP biosynthesis; dUMP from dCTP (dUTP route): step 1/2. Its function is as follows. Catalyzes the deamination of dCTP to dUTP. The polypeptide is dCTP deaminase (Rickettsia typhi (strain ATCC VR-144 / Wilmington)).